Here is a 122-residue protein sequence, read N- to C-terminus: Large ribosomal subunit protein uL18 (122 aa).

This sequence belongs to the universal ribosomal protein uL18 family. In terms of assembly, part of the 50S ribosomal subunit; part of the 5S rRNA/L5/L18/L25 subcomplex. Contacts the 5S and 23S rRNAs.

Its function is as follows. This is one of the proteins that bind and probably mediate the attachment of the 5S RNA into the large ribosomal subunit, where it forms part of the central protuberance. The sequence is that of Large ribosomal subunit protein uL18 from Thermotoga petrophila (strain ATCC BAA-488 / DSM 13995 / JCM 10881 / RKU-1).